The primary structure comprises 383 residues: GTP-binding protein 10 (383 aa).

Residues 13–148 (GNFIDNLRIY…RIIHLDLKLI (136 aa)) form the Obg domain. In terms of domain architecture, OBG-type G spans 149 to 344 (SDVGLVGFPN…LIGCIRKTMD (196 aa)). GTP is bound by residues 155 to 162 (GFPNAGKS), 202 to 206 (DLPGL), and 278 to 281 (NKMD). Residues 362 to 383 (LQKETSRTVKRNLKNSPQRTHH) form a disordered region. Basic residues predominate over residues 369–383 (TVKRNLKNSPQRTHH).

This sequence belongs to the TRAFAC class OBG-HflX-like GTPase superfamily. OBG GTPase family.

It is found in the nucleus. Its subcellular location is the nucleolus. In terms of biological role, may be involved in the ribosome maturation process. In Xenopus tropicalis (Western clawed frog), this protein is GTP-binding protein 10 (gtpbp10).